The following is a 650-amino-acid chain: tRNA-dihydrouridine(47) synthase [NAD(P)(+)]-like (650 aa).

Disordered regions lie at residues 1–24 (MAEG…GALE) and 46–120 (EAKG…NYDK). Residue alanine 2 is modified to N-acetylalanine. Composition is skewed to basic and acidic residues over residues 48–58 (KGQEKTCRETE) and 70–79 (PEAKRIRLED). The span at 101–113 (KRARGQNKGRPHV) shows a compositional bias: basic residues. 2 C3H1-type zinc fingers span residues 118–148 (YDKN…HDVG) and 156–186 (ADLG…HLRP). The interval 235–284 (FSQGPTPAAAVPEGTAAEGAPRQENCGAQQVPAGPGTSTPPSSPVRTCGP) is disordered. The residue at position 236 (serine 236) is a Phosphoserine. Threonine 273 carries the post-translational modification Phosphothreonine. Phosphoserine is present on residues serine 276 and serine 277. FMN is bound by residues 311–313 (PLT) and glutamine 365. Cysteine 396 serves as the catalytic Proton donor. Lysine 416 is covalently cross-linked (Glycyl lysine isopeptide (Lys-Gly) (interchain with G-Cter in SUMO2)). Residues lysine 435, histidine 465, 497 to 499 (NGD), and 520 to 521 (AR) contribute to the FMN site.

Belongs to the Dus family. Dus3 subfamily. FMN serves as cofactor.

The catalysed reaction is 5,6-dihydrouridine(47) in tRNA + NAD(+) = uridine(47) in tRNA + NADH + H(+). It carries out the reaction 5,6-dihydrouridine(47) in tRNA + NADP(+) = uridine(47) in tRNA + NADPH + H(+). It catalyses the reaction a 5,6-dihydrouridine in mRNA + NAD(+) = a uridine in mRNA + NADH + H(+). The enzyme catalyses a 5,6-dihydrouridine in mRNA + NADP(+) = a uridine in mRNA + NADPH + H(+). In terms of biological role, catalyzes the synthesis of dihydrouridine, a modified base, in various RNAs, such as tRNAs, mRNAs and some long non-coding RNAs (lncRNAs). Mainly modifies the uridine in position 47 (U47) in the D-loop of most cytoplasmic tRNAs. Also able to mediate the formation of dihydrouridine in some mRNAs, thereby regulating their translation. The chain is tRNA-dihydrouridine(47) synthase [NAD(P)(+)]-like from Homo sapiens (Human).